The primary structure comprises 312 residues: Bifunctional pinoresinol-lariciresinol reductase (312 aa).

NADP(+)-binding positions include 10–16 (GGTGYIG), arginine 35, and lysine 44. Lysine 136 serves as the catalytic Proton acceptor. NADP(+) is bound at residue arginine 140. Substrate is bound at residue histidine 268.

It belongs to the NmrA-type oxidoreductase family. Isoflavone reductase subfamily. In terms of assembly, dimer. In terms of tissue distribution, expressed in seed coats, but not in embryos, leaves, stems and roots.

Its function is as follows. Reductase involved in lignan biosynthesis. Catalyzes the sequential conversion of pinoresinol into lariciresinol and of lariciresinol into secoisolariciresinol. Abstracts the 4R-hydride from the NADPH cofactor during catalysis. This chain is Bifunctional pinoresinol-lariciresinol reductase, found in Linum usitatissimum (Flax).